A 201-amino-acid polypeptide reads, in one-letter code: Urease accessory protein UreG (201 aa).

Position 11–18 (Gly-11–Thr-18) interacts with GTP.

It belongs to the SIMIBI class G3E GTPase family. UreG subfamily. In terms of assembly, homodimer. UreD, UreF and UreG form a complex that acts as a GTP-hydrolysis-dependent molecular chaperone, activating the urease apoprotein by helping to assemble the nickel containing metallocenter of UreC. The UreE protein probably delivers the nickel.

It localises to the cytoplasm. In terms of biological role, facilitates the functional incorporation of the urease nickel metallocenter. This process requires GTP hydrolysis, probably effectuated by UreG. The sequence is that of Urease accessory protein UreG from Synechococcus sp. (strain CC9605).